The chain runs to 257 residues: 1-(5-phosphoribosyl)-5-[(5-phosphoribosylamino)methylideneamino] imidazole-4-carboxamide isomerase (257 aa).

D8 functions as the Proton acceptor in the catalytic mechanism. The active-site Proton donor is D129.

The protein belongs to the HisA/HisF family.

It is found in the cytoplasm. The enzyme catalyses 1-(5-phospho-beta-D-ribosyl)-5-[(5-phospho-beta-D-ribosylamino)methylideneamino]imidazole-4-carboxamide = 5-[(5-phospho-1-deoxy-D-ribulos-1-ylimino)methylamino]-1-(5-phospho-beta-D-ribosyl)imidazole-4-carboxamide. Its pathway is amino-acid biosynthesis; L-histidine biosynthesis; L-histidine from 5-phospho-alpha-D-ribose 1-diphosphate: step 4/9. The polypeptide is 1-(5-phosphoribosyl)-5-[(5-phosphoribosylamino)methylideneamino] imidazole-4-carboxamide isomerase (Thermosynechococcus vestitus (strain NIES-2133 / IAM M-273 / BP-1)).